A 945-amino-acid polypeptide reads, in one-letter code: Isoleucine--tRNA ligase (945 aa).

The short motif at 66–76 (PYANGDIHLGH) is the 'HIGH' region element. E581 contributes to the L-isoleucyl-5'-AMP binding site. The short motif at 622-626 (KMSKS) is the 'KMSKS' region element. K625 contributes to the ATP binding site. C908, C911, C928, and C931 together coordinate Zn(2+).

The protein belongs to the class-I aminoacyl-tRNA synthetase family. IleS type 1 subfamily. Monomer. Requires Zn(2+) as cofactor.

Its subcellular location is the cytoplasm. It carries out the reaction tRNA(Ile) + L-isoleucine + ATP = L-isoleucyl-tRNA(Ile) + AMP + diphosphate. Its function is as follows. Catalyzes the attachment of isoleucine to tRNA(Ile). As IleRS can inadvertently accommodate and process structurally similar amino acids such as valine, to avoid such errors it has two additional distinct tRNA(Ile)-dependent editing activities. One activity is designated as 'pretransfer' editing and involves the hydrolysis of activated Val-AMP. The other activity is designated 'posttransfer' editing and involves deacylation of mischarged Val-tRNA(Ile). This chain is Isoleucine--tRNA ligase, found in Burkholderia vietnamiensis (strain G4 / LMG 22486) (Burkholderia cepacia (strain R1808)).